The primary structure comprises 291 residues: ADP-dependent (S)-NAD(P)H-hydrate dehydratase (291 aa).

Residues serine 5–tyrosine 273 enclose the YjeF C-terminal domain. Alanine 40, glycine 103, and histidine 153 together coordinate (6S)-NADPHX. Glycine 215 is a binding site for AMP. Residue aspartate 216 coordinates (6S)-NADPHX.

Belongs to the NnrD/CARKD family. Homotetramer. Mg(2+) serves as cofactor.

It catalyses the reaction (6S)-NADHX + ADP = AMP + phosphate + NADH + H(+). The enzyme catalyses (6S)-NADPHX + ADP = AMP + phosphate + NADPH + H(+). In terms of biological role, catalyzes the dehydration of the S-form of NAD(P)HX at the expense of ADP, which is converted to AMP. Together with NAD(P)HX epimerase, which catalyzes the epimerization of the S- and R-forms, the enzyme allows the repair of both epimers of NAD(P)HX, a damaged form of NAD(P)H that is a result of enzymatic or heat-dependent hydration. This Enterococcus faecalis (strain ATCC 700802 / V583) protein is ADP-dependent (S)-NAD(P)H-hydrate dehydratase.